Consider the following 504-residue polypeptide: Ammonium transporter 1 member 4 (504 aa).

The next 12 membrane-spanning stretches (helical) occupy residues 12-32, 55-75, 90-110, 136-156, 161-181, 207-227, 251-271, 292-314, 318-338, 344-364, 377-397, and 430-450; these read LIPL…AEYI, LLFS…LCAG, VIDA…FAFG, YFLY…GSIA, FVAY…IVSH, FAGS…GALI, LVVL…PGSF, AVGR…TLFG, IDGY…FAAI, VVEP…LMGC, LEAA…TGLF, and VVQI…LFFI. The residue at position 471 (Thr-471) is a Phosphothreonine.

Belongs to the ammonia transporter channel (TC 1.A.11.2) family. In terms of tissue distribution, specifically expressed in pollen grains and tubes.

The protein localises to the cell membrane. Functionally, high affinity ammonium transporter in the plasma membrane. The polypeptide is Ammonium transporter 1 member 4 (AMT1-4) (Arabidopsis thaliana (Mouse-ear cress)).